Consider the following 72-residue polypeptide: Translation initiation factor IF-1 (72 aa).

Residues 1 to 72 form the S1-like domain; the sequence is MAKDDVIEVE…NRGRITYRFK (72 aa). Tyrosine 60 is modified (phosphotyrosine).

Belongs to the IF-1 family. As to quaternary structure, component of the 30S ribosomal translation pre-initiation complex which assembles on the 30S ribosome in the order IF-2 and IF-3, IF-1 and N-formylmethionyl-tRNA(fMet); mRNA recruitment can occur at any time during PIC assembly.

It localises to the cytoplasm. In terms of biological role, one of the essential components for the initiation of protein synthesis. Stabilizes the binding of IF-2 and IF-3 on the 30S subunit to which N-formylmethionyl-tRNA(fMet) subsequently binds. Helps modulate mRNA selection, yielding the 30S pre-initiation complex (PIC). Upon addition of the 50S ribosomal subunit IF-1, IF-2 and IF-3 are released leaving the mature 70S translation initiation complex. This Bacillus thuringiensis (strain Al Hakam) protein is Translation initiation factor IF-1.